The following is a 536-amino-acid chain: Phosphoenolpyruvate carboxykinase (ATP) (536 aa).

Substrate is bound by residues arginine 61, tyrosine 195, and lysine 201. Residues lysine 201, histidine 220, and 236–244 each bind ATP; that span reads GLSGTGKTT. Mn(2+)-binding residues include lysine 201 and histidine 220. Residue aspartate 257 coordinates Mn(2+). 3 residues coordinate ATP: glutamate 285, arginine 322, and threonine 447. Arginine 322 is a substrate binding site.

It belongs to the phosphoenolpyruvate carboxykinase (ATP) family. Mn(2+) serves as cofactor.

The protein localises to the cytoplasm. The enzyme catalyses oxaloacetate + ATP = phosphoenolpyruvate + ADP + CO2. It functions in the pathway carbohydrate biosynthesis; gluconeogenesis. Its function is as follows. Involved in the gluconeogenesis. Catalyzes the conversion of oxaloacetate (OAA) to phosphoenolpyruvate (PEP) through direct phosphoryl transfer between the nucleoside triphosphate and OAA. This Sinorhizobium medicae (strain WSM419) (Ensifer medicae) protein is Phosphoenolpyruvate carboxykinase (ATP).